Consider the following 395-residue polypeptide: Small ribosomal subunit protein mS31 (395 aa).

Residues 1–65 (MFPRVSTFLP…IQRYFGTNSV (65 aa)) constitute a mitochondrion transit peptide. Disordered regions lie at residues 70 to 97 (KDKQ…NTKK) and 175 to 196 (SELL…DAKR). Residues 183–196 (QHEEESRAQRDAKR) are compositionally biased toward basic and acidic residues.

This sequence belongs to the mitochondrion-specific ribosomal protein mS31 family. As to quaternary structure, component of the mitochondrial small ribosomal subunit (mt-SSU). Mature mammalian 55S mitochondrial ribosomes consist of a small (28S) and a large (39S) subunit. The 28S small subunit contains a 12S ribosomal RNA (12S mt-rRNA) and 30 different proteins. The 39S large subunit contains a 16S rRNA (16S mt-rRNA), a copy of mitochondrial valine transfer RNA (mt-tRNA(Val)), which plays an integral structural role, and 52 different proteins.

The protein localises to the mitochondrion. The chain is Small ribosomal subunit protein mS31 (MRPS31) from Homo sapiens (Human).